We begin with the raw amino-acid sequence, 1677 residues long: ELMO domain-containing protein E (1677 aa).

14 disordered regions span residues 112 to 139, 168 to 194, 264 to 372, 592 to 625, 775 to 801, 888 to 947, 982 to 1002, 1047 to 1075, 1122 to 1141, 1197 to 1248, 1261 to 1404, 1434 to 1454, 1467 to 1593, and 1654 to 1677; these read TTTSSSSSSSSPSSSSSSSSSSSSSSPS, NSKDTNNSGTINNNNNNNNNSGGSNIK, QLHG…NTTE, DDDNDNNNNQELNNNNNNNNNNNYNIKTKPRSNS, PNSNNPTDNIITTNTNTTTTTTTSTNN, INKN…NQDI, KIRSSSSTPDTSSPPLNSQPE, STNNHHIGGGGGGGSSDNLLSRSPEETRS, KQKSPKLQGGSGPWKKGNVS, NNNI…DNHA, DDDD…RKKR, SPGSYDAHLNNPHLSVSPQPE, KNPE…GDVS, and ESQRDLQHQASSSNLKFSLASSSK. Composition is skewed to low complexity over residues 115-139 and 172-194; these read SSSSSSSSPSSSSSSSSSSSSSSPS and TNNSGTINNNNNNNNNSGGSNIK. Residues 269–278 are compositionally biased toward gly residues; the sequence is SIGGGGGGSG. 3 stretches are compositionally biased toward low complexity: residues 307–334, 341–352, and 597–616; these read SQSNSPQSSSFVKSQQIQQQQQYQKPNN, TTTTTTTTTTTS, and NNNNQELNNNNNNNNNNNYN. Residues 492–710 enclose the ELMO domain; sequence SHQILLSDLW…HTREIIEKVC (219 aa). The span at 891–903 shows a compositional bias: gly residues; it reads NGGGGGGGGGGGV. Over residues 922–933 the composition is skewed to acidic residues; sequence IDDSDDENDNDE. Low complexity-rich tracts occupy residues 934–946 and 985–996; these read VNNNNNSNRINQD and SSSSTPDTSSPP. Residues 1186–1212 adopt a coiled-coil conformation; the sequence is LLDDVLDLNQTNNNIDNENDDINEAII. Over residues 1228-1238 the composition is skewed to acidic residues; sequence EEEEEEEEEEE. The segment covering 1285-1305 has biased composition (low complexity); sequence NNTTTTTTTTTTTTTTTTNTT. Over residues 1306–1334 the composition is skewed to polar residues; that stretch reads GQKRISILSTDTNRPGSSNYGESSLSNGS. Over residues 1387-1397 the composition is skewed to acidic residues; it reads DDEDDEDDDDK. Over residues 1445–1454 the composition is skewed to polar residues; it reads PHLSVSPQPE. Composition is skewed to low complexity over residues 1475–1488, 1503–1574, and 1663–1677; these read LSSSYDSSTSPLLS, SNLI…PSSS, and ASSSNLKFSLASSSK.

The sequence is that of ELMO domain-containing protein E (elmoE) from Dictyostelium discoideum (Social amoeba).